Reading from the N-terminus, the 81-residue chain is CLAVATA3/ESR (CLE)-related protein 6 (81 aa).

A signal peptide spans 1 to 26; the sequence is MANLILKQSLIILLIIYSTPILSSQA. Hydroxyproline is present on residues proline 73 and proline 76. Proline 76 carries O-linked (Ara...) hydroxyproline glycosylation.

It belongs to the CLV3/ESR signal peptide family. The O-glycosylation (arabinosylation) of the hydroxyproline Pro-76 enhances binding affinity of the CLE6p peptide for its receptor. As to expression, mostly expressed in roots, seedlings, stems and flowers, and, to a lower extent, in apex and siliques.

It is found in the secreted. Its subcellular location is the extracellular space. Functionally, extracellular signal peptide that regulates cell fate. This is CLAVATA3/ESR (CLE)-related protein 6 from Arabidopsis thaliana (Mouse-ear cress).